Consider the following 677-residue polypeptide: Collagen alpha-2(IX) chain (677 aa).

The N-terminal stretch at 1 to 21 is a signal peptide; the sequence is MAHRSPALCLLLLHAACLCLA. The interval 25 to 161 is triple-helical region 4 (COL4); sequence GPPGEPGPRG…PGKPGPPGHI (137 aa). Residues 28–41 are compositionally biased toward pro residues; sequence GEPGPRGPPGPPGV. The segment at 28-516 is disordered; that stretch reads GEPGPRGPPG…MPGQRGVAGR (489 aa). The segment covering 53 to 66 has biased composition (low complexity); that stretch reads SPGAPGSPGAKGEP. Positions 68–77 are enriched in pro residues; the sequence is APGPDGPPGK. Residues 91-100 show a composition bias toward gly residues; that stretch reads GPWGGQGLKG. Pro residues-rich tracts occupy residues 104–121 and 137–158; these read LPGPPGLPGPSLPGPPGL and KGDPGPDGPRGPPGPPGKPGPP. Position 158 is a 4-hydroxyproline (proline 158). A nonhelical region 4 (NC4) region spans residues 162–178; the sequence is QGVEGSADFLCPTNCPP. O-linked (Xyl...) (glycosaminoglycan) serine glycosylation occurs at serine 167. The residue at position 178 (proline 178) is a 4-hydroxyproline. The segment at 179 to 517 is triple-helical region 3 (COL3); it reads GPKGPQGLQG…PGQRGVAGRD (339 aa). A 5-hydroxylysine modification is found at lysine 181. The O-linked (Gal...) hydroxylysine glycan is linked to lysine 181. At lysine 190 the chain carries Allysine. 3 stretches are compositionally biased toward low complexity: residues 363–382, 430–442, and 496–505; these read TPGLDGEPGPPGDAGTAGVP, PGKTGPKGSTGDP, and RGLLGERGVP. A nonhelical region 3 (NC3) region spans residues 518–547; that stretch reads AGDQHIIDVVLKMMQEQLAEVAVSAKRAAL. The segment at 548–630 is triple-helical region 2 (COL2); sequence GGVGAMGPPG…PGLPGIPGHA (83 aa). Positions 550–657 are disordered; it reads VGAMGPPGPP…GRPGSPGPAG (108 aa). The segment covering 555–565 has biased composition (pro residues); that stretch reads PPGPPGPPGPP. Residues 597–609 show a composition bias toward basic and acidic residues; sequence KRGEKGERGDTGR. Residues 631-632 are nonhelical region 2 (NC2); it reads LA. The segment at 633–662 is triple-helical region 1 (COL1); it reads GKDGERGPPGVPGDAGRPGSPGPAGLPGFC. Residues 663–677 form a nonhelical region 1 (NC1) region; it reads EPAACLGALPTPRHG.

It belongs to the fibril-associated collagens with interrupted helices (FACIT) family. Heterotrimer of an alpha 1(IX), an alpha 2(IX) and an alpha 3(IX) chain. The chains are linked to each other by interchain disulfide bonds. Trimers are also cross-linked via hydroxylysines. In terms of processing, covalently linked to the telopeptides of type II collagen by lysine-derived cross-links. Prolines at the third position of the tripeptide repeating unit (G-X-Y) are hydroxylated in some or all of the chains.

The protein resides in the secreted. It is found in the extracellular space. The protein localises to the extracellular matrix. Its function is as follows. Structural component of hyaline cartilage and vitreous of the eye. This chain is Collagen alpha-2(IX) chain (COL9A2), found in Gallus gallus (Chicken).